The chain runs to 385 residues: Na(+)/H(+) antiporter NhaA (385 aa).

11 helical membrane passes run 9–29 (YSAI…NVLD), 45–65 (IFGL…VFFF), 87–107 (IIPG…YLSV), 114–134 (GWPV…AIFG), 155–175 (AGIV…WIIV), 198–218 (TFLI…SVYQ), 220–235 (GIHA…IMLN), 245–265 (ALEP…AAMV), 282–302 (ILLG…IIAL), 312–332 (FFNL…SLLM), and 345–365 (QGVI…IILM).

It belongs to the NhaA Na(+)/H(+) (TC 2.A.33) antiporter family.

It is found in the cell membrane. The catalysed reaction is Na(+)(in) + 2 H(+)(out) = Na(+)(out) + 2 H(+)(in). Na(+)/H(+) antiporter that extrudes sodium in exchange for external protons. This is Na(+)/H(+) antiporter NhaA from Tropheryma whipplei (strain TW08/27) (Whipple's bacillus).